The primary structure comprises 184 residues: ATP synthase subunit b, chloroplastic (184 aa).

The chain crosses the membrane as a helical span at residues 27–49 (LATNPINLSVVLGVLIFFGKGVL).

Belongs to the ATPase B chain family. As to quaternary structure, F-type ATPases have 2 components, F(1) - the catalytic core - and F(0) - the membrane proton channel. F(1) has five subunits: alpha(3), beta(3), gamma(1), delta(1), epsilon(1). F(0) has four main subunits: a(1), b(1), b'(1) and c(10-14). The alpha and beta chains form an alternating ring which encloses part of the gamma chain. F(1) is attached to F(0) by a central stalk formed by the gamma and epsilon chains, while a peripheral stalk is formed by the delta, b and b' chains.

It is found in the plastid. It localises to the chloroplast thylakoid membrane. F(1)F(0) ATP synthase produces ATP from ADP in the presence of a proton or sodium gradient. F-type ATPases consist of two structural domains, F(1) containing the extramembraneous catalytic core and F(0) containing the membrane proton channel, linked together by a central stalk and a peripheral stalk. During catalysis, ATP synthesis in the catalytic domain of F(1) is coupled via a rotary mechanism of the central stalk subunits to proton translocation. Functionally, component of the F(0) channel, it forms part of the peripheral stalk, linking F(1) to F(0). This is ATP synthase subunit b, chloroplastic from Chloranthus spicatus (Chulantree).